An 87-amino-acid polypeptide reads, in one-letter code: uncharacterized protein (87 aa).

It to A.fulgidus AF_0255 and AF_1348.

This is an uncharacterized protein from Archaeoglobus fulgidus (strain ATCC 49558 / DSM 4304 / JCM 9628 / NBRC 100126 / VC-16).